We begin with the raw amino-acid sequence, 534 residues long: MYTNYSLTSSDAMPRTYLVGTASPEMSKKKRQSANCDKPTRRVIHIIDTNEHSEVDLKNELPITCTNEDGEMTSSSWTSQTANDFLKLAYVNAKLDPSLPSQYFKQDIINVLQSLEIPGWSVPGSKESSLNKNLLTLTQIKGALTNVIYKIHYPNLPPLLMRIFGDSIDSVIDREYELKVIARLSFYDLGPKLEGFFENGRFEKYIEGSRTSTQADFIDRDTSIKIAKKLKELHCTVPLTHKEITDQPSCWTTFDQWIKLIDSHKEWVSNNVNISENLRCSSWNFFLKSFKNYKRWLYNDSAFTSKLLREDDKDSMINSGLKMVFCHNDLQHGNLLFKSKGKDDISVGDLTIIDFEYAGPNPVVFDLSNHLNEWMQDYNDVQSFKSHIDKYPKEEDILVFAQSYINHMNENHVKIASQEVRILYNLIIEWRPCTQLFWCLWALLQSGRLPQRPLIEGEKLMSEKAGLGDETHLMEHKNKENGKYDCSEDDSFNYLGFCKEKMSVFWGDLITLGVIDKDCPDIGKTDYLDTKLIF.

Residue S23 is modified to Phosphoserine.

This sequence belongs to the choline/ethanolamine kinase family.

The protein localises to the cytoplasm. The catalysed reaction is ethanolamine + ATP = phosphoethanolamine + ADP + H(+). It catalyses the reaction choline + ATP = phosphocholine + ADP + H(+). Its pathway is phospholipid metabolism; phosphatidylethanolamine biosynthesis; phosphatidylethanolamine from ethanolamine: step 1/3. In terms of biological role, catalyzes the committed step of phosphatidylethanolamine synthesis via the CDP-ethanolamine branch of the Kennedy pathway. Also exhibits choline kinase activity, thus contributing to phosphatidylcholine synthesis via the CDP-choline pathway, but its preferred substrate is ethanolamine. The chain is Ethanolamine kinase (EKI1) from Saccharomyces cerevisiae (strain ATCC 204508 / S288c) (Baker's yeast).